The primary structure comprises 132 residues: Small ribosomal subunit protein uS8 (132 aa).

It belongs to the universal ribosomal protein uS8 family. As to quaternary structure, part of the 30S ribosomal subunit. Contacts proteins S5 and S12.

Functionally, one of the primary rRNA binding proteins, it binds directly to 16S rRNA central domain where it helps coordinate assembly of the platform of the 30S subunit. This Azorhizobium caulinodans (strain ATCC 43989 / DSM 5975 / JCM 20966 / LMG 6465 / NBRC 14845 / NCIMB 13405 / ORS 571) protein is Small ribosomal subunit protein uS8.